Consider the following 105-residue polypeptide: Malonate decarboxylase acyl carrier protein (105 aa).

Ser-28 bears the O-(phosphoribosyl dephospho-coenzyme A)serine mark.

It belongs to the MdcC family. Covalently binds the prosthetic group of malonate decarboxylase.

It is found in the cytoplasm. Functionally, subunit of malonate decarboxylase, it is an acyl carrier protein to which acetyl and malonyl thioester residues are bound via a 2'-(5''-phosphoribosyl)-3'-dephospho-CoA prosthetic group and turn over during the catalytic mechanism. The chain is Malonate decarboxylase acyl carrier protein from Xanthomonas euvesicatoria pv. vesicatoria (strain 85-10) (Xanthomonas campestris pv. vesicatoria).